Consider the following 193-residue polypeptide: Bifunctional protein PyrR (193 aa).

Residues 48-49, Arg-89, Arg-93, 110-118, Arg-143, and Val-167 each bind substrate; these read TR and DDVLFSGRT. A PRPP-binding motif is present at residues 106–118; the sequence is VVLVDDVLFSGRT.

This sequence belongs to the purine/pyrimidine phosphoribosyltransferase family. PyrR subfamily.

The catalysed reaction is UMP + diphosphate = 5-phospho-alpha-D-ribose 1-diphosphate + uracil. Functionally, regulates the transcription of the pyrimidine nucleotide (pyr) operon in response to exogenous pyrimidines. Its function is as follows. Also displays a weak uracil phosphoribosyltransferase activity which is not physiologically significant. This chain is Bifunctional protein PyrR, found in Streptomyces coelicolor (strain ATCC BAA-471 / A3(2) / M145).